Reading from the N-terminus, the 259-residue chain is Imidazole glycerol phosphate synthase subunit HisF (259 aa).

Catalysis depends on residues D11 and D130.

It belongs to the HisA/HisF family. Heterodimer of HisH and HisF.

The protein resides in the cytoplasm. It catalyses the reaction 5-[(5-phospho-1-deoxy-D-ribulos-1-ylimino)methylamino]-1-(5-phospho-beta-D-ribosyl)imidazole-4-carboxamide + L-glutamine = D-erythro-1-(imidazol-4-yl)glycerol 3-phosphate + 5-amino-1-(5-phospho-beta-D-ribosyl)imidazole-4-carboxamide + L-glutamate + H(+). It participates in amino-acid biosynthesis; L-histidine biosynthesis; L-histidine from 5-phospho-alpha-D-ribose 1-diphosphate: step 5/9. IGPS catalyzes the conversion of PRFAR and glutamine to IGP, AICAR and glutamate. The HisF subunit catalyzes the cyclization activity that produces IGP and AICAR from PRFAR using the ammonia provided by the HisH subunit. In Shewanella amazonensis (strain ATCC BAA-1098 / SB2B), this protein is Imidazole glycerol phosphate synthase subunit HisF.